We begin with the raw amino-acid sequence, 394 residues long: MKRNPHFVSLTKNYLFADLQKRVAQFRLENPQHTVINLSIGDTTQPLNASVAEAFASSIARLSSPTTCRGYGPDFGLPALRQKLSEDFYRGCVDAKEIFISDGAKADLFRLLSFFGPNQTVAIQDPSYPAYLDIARLTGAKEIIALPCLQENAFFPEFPEDTHIDILCLCSPNNPTGTVLNKDQLRAIVHYAIEHEILILFDAAYSTFISDPSLPKSIFEIPDARFCAIEINSFSKPLGFAGIRLGWTVIPQELTYADGHFVIQDWERFLSTTFNGASIPAQEAGVAGLSILPQLEAIHYYRENSDLLRKALLATGFEVFGGEHAPYLWVKPTQANISDRDLFDFFLREYHIAITPGIGFGRSGSGFVRFSSLGKREDILAACERLQMAPALQS.

2 residues coordinate substrate: Tyr-14 and Gly-41. Pyridoxal 5'-phosphate is bound by residues Tyr-71, 104 to 105, Tyr-128, Asn-174, Tyr-205, and 233 to 235; these read AK and SFS. 3 residues coordinate substrate: Lys-105, Tyr-128, and Asn-174. An N6-(pyridoxal phosphate)lysine modification is found at Lys-236. Residues Arg-244 and Asn-275 each coordinate pyridoxal 5'-phosphate. Asn-275 and Arg-369 together coordinate substrate.

This sequence belongs to the class-I pyridoxal-phosphate-dependent aminotransferase family. LL-diaminopimelate aminotransferase subfamily. Homodimer. Pyridoxal 5'-phosphate is required as a cofactor.

It carries out the reaction (2S,6S)-2,6-diaminopimelate + 2-oxoglutarate = (S)-2,3,4,5-tetrahydrodipicolinate + L-glutamate + H2O + H(+). The protein operates within amino-acid biosynthesis; L-lysine biosynthesis via DAP pathway; LL-2,6-diaminopimelate from (S)-tetrahydrodipicolinate (aminotransferase route): step 1/1. Involved in the synthesis of meso-diaminopimelate (m-DAP or DL-DAP), required for both lysine and peptidoglycan biosynthesis. Catalyzes the direct conversion of tetrahydrodipicolinate to LL-diaminopimelate. The protein is LL-diaminopimelate aminotransferase of Chlamydia trachomatis serovar L2b (strain UCH-1/proctitis).